Consider the following 339-residue polypeptide: Dihydroorotate dehydrogenase (quinone) (339 aa).

Residues 62 to 66 and Thr-86 each bind FMN; that span reads AGMDK. Residue Lys-66 coordinates substrate. 111–115 serves as a coordination point for substrate; sequence NRMGF. FMN contacts are provided by Asn-139 and Asn-172. Asn-172 is a substrate binding site. The Nucleophile role is filled by Ser-175. Asn-177 provides a ligand contact to substrate. Residues Lys-217 and Thr-245 each contribute to the FMN site. 246–247 serves as a coordination point for substrate; the sequence is NT. FMN-binding positions include Gly-268, Gly-297, and 318-319; that span reads YS.

This sequence belongs to the dihydroorotate dehydrogenase family. Type 2 subfamily. Monomer. FMN is required as a cofactor.

Its subcellular location is the cell membrane. The enzyme catalyses (S)-dihydroorotate + a quinone = orotate + a quinol. The protein operates within pyrimidine metabolism; UMP biosynthesis via de novo pathway; orotate from (S)-dihydroorotate (quinone route): step 1/1. In terms of biological role, catalyzes the conversion of dihydroorotate to orotate with quinone as electron acceptor. In Shewanella pealeana (strain ATCC 700345 / ANG-SQ1), this protein is Dihydroorotate dehydrogenase (quinone).